We begin with the raw amino-acid sequence, 255 residues long: MKRLNTLVLYISFLILIISIVAGCGTGKEAEIKKSFEKTLSMYPIKNLEDLYDKEGYRDDEFDKNDKGTWTISSEMAIQKKGEALNIKGMVLKLNRNTRSAKGFYYVNAIKKDENGRPQDKQIEYPVKMIDNKIIPTKDIKDEKIKKEIENFKFFAQYGNFKDLTKYKGGDISYNPEAPIYSAKYQLTNDDYNVKQLRKRYDIPTNKAPKLLLKGSGNLDGSSIGYKKIEFTFVEKKGENTYFTANLHFKPSNDE.

Positions 1–23 (MKRLNTLVLYISFLILIISIVAG) are cleaved as a signal peptide. The N-palmitoyl cysteine moiety is linked to residue C24. C24 carries S-diacylglycerol cysteine lipidation.

The protein belongs to the staphylococcal tandem lipoprotein family.

The protein localises to the cell membrane. This is an uncharacterized protein from Staphylococcus aureus (strain N315).